The sequence spans 312 residues: Retron Ec83 reverse transcriptase (312 aa).

A Reverse transcriptase domain is found at 14 to 239; that stretch reads PDFDVLLKSR…HNRHVTGVTL (226 aa). D97, D185, and D186 together coordinate Mg(2+).

It belongs to the bacterial reverse transcriptase family.

It carries out the reaction DNA(n) + a 2'-deoxyribonucleoside 5'-triphosphate = DNA(n+1) + diphosphate. In terms of biological role, reverse transcriptase (RT) component of antiviral defense system retron Ec83, composed of a non-coding RNA (ncRNA), this reverse transcriptase (RT), a probable ATPase and a putative HNH endonuclease. Expression of retron Ec83 confers protection against bacteriophages T2, T4 and T6. At multiplicity of infection (MOI) of 0.02 cultures slow growth when infected with T4 but do not collapse, at MOI 2 cultures enter growth stasis. Responsible for synthesis of msDNA-Ec83 (a linear ssDNA with a 5'-terminal phosphate residue). Unlike most known msDNAs the mature product from the original strain does not have an RNA component. When the ncRNA plus RT are expressed in strain K12 / JM109 only linear DNA is seen in stationary phase cells, but logarithmic phase cells have both a linear and branched msDNA (a branched molecule with RNA linked by a 2',5'-phosphodiester bond to ssDNA, a 'classic' retron). The branched msDNA is probably the precursor for the mature linear msDNA, the precursor is cleaved endonucleolytically by ExoVII (xseA-xseB) leaving the observed mature 5'-phosphate ssDNA terminus. The retron transcript serves as primer (from a conserved internal G residue) and template for the reaction, and codes for the RT. Overexpression of the ncRNA and RT, which leads to increased levels of msDNA, is mutagenic in vivo. This may be due to a mismatch in the msDNA stem which binds and sequesters MutS and/or MutL. In Escherichia coli, this protein is Retron Ec83 reverse transcriptase.